Here is a 78-residue protein sequence, read N- to C-terminus: Acyl carrier protein (78 aa).

In terms of domain architecture, Carrier spans 2–77; sequence STIEESVKAI…AAIDFIQASQ (76 aa). Ser-37 bears the O-(pantetheine 4'-phosphoryl)serine mark.

The protein belongs to the acyl carrier protein (ACP) family. Post-translationally, 4'-phosphopantetheine is transferred from CoA to a specific serine of apo-ACP by AcpS. This modification is essential for activity because fatty acids are bound in thioester linkage to the sulfhydryl of the prosthetic group.

It is found in the cytoplasm. It functions in the pathway lipid metabolism; fatty acid biosynthesis. Its function is as follows. Carrier of the growing fatty acid chain in fatty acid biosynthesis. The sequence is that of Acyl carrier protein from Sodalis glossinidius (strain morsitans).